Here is a 425-residue protein sequence, read N- to C-terminus: tRNA(Ile)-lysidine synthase (425 aa).

Residue 27–32 (SGGLDS) coordinates ATP.

This sequence belongs to the tRNA(Ile)-lysidine synthase family.

The protein resides in the cytoplasm. The catalysed reaction is cytidine(34) in tRNA(Ile2) + L-lysine + ATP = lysidine(34) in tRNA(Ile2) + AMP + diphosphate + H(+). In terms of biological role, ligates lysine onto the cytidine present at position 34 of the AUA codon-specific tRNA(Ile) that contains the anticodon CAU, in an ATP-dependent manner. Cytidine is converted to lysidine, thus changing the amino acid specificity of the tRNA from methionine to isoleucine. The polypeptide is tRNA(Ile)-lysidine synthase (Streptococcus gordonii (strain Challis / ATCC 35105 / BCRC 15272 / CH1 / DL1 / V288)).